A 466-amino-acid chain; its full sequence is MEEDDDMAATMEEIVAHAKHRGFVFPGSEIYGGLANTWDYGPLGVELKNNIKRAWWKKFVQESPHNVGLDAAILMNPKTWEASGHLGNFNDPMVDCKQCKARHRADKLIEQALEEKGIEMVVDGLPLAKMEELIREYDIACPECGSRDFTNVRQFNLMFKTYQGVTESSANEIYLRPETAQGIFVNFKNVQRTMRKKLPFGIAQIGKSFRNEITPGNFTFRTREFEQMELEFFCKPGEELKWFDYWKQFCKEWLLSLGMNEEHIRLRDHTKEELSHYSNATTDIEYQFPFGWGELWGIASRTDYDLKQHMEHSGEDFHYLDQETNERYIPYCIEPSLGADRVTLAFMIDAYDEEELEDGTTRTVMHLHPALAPYKAAVLPLSKKLGDGARRIYEELAKHFMVDYDETGSIGKRYRRQDEIGTPFCITYDFESEQDGQVTVRDRDTMEQVRLPIGELKAFLDKKIAF.

2 residues coordinate substrate: arginine 104 and glutamate 178. ATP is bound by residues 210 to 212, 220 to 225, 294 to 295, and 338 to 341; these read RNE, FRTREF, EL, and GADR. A substrate-binding site is contributed by 225–229; sequence FEQME. 334–338 provides a ligand contact to substrate; it reads EPSLG.

This sequence belongs to the class-II aminoacyl-tRNA synthetase family. In terms of assembly, homodimer.

It is found in the cytoplasm. The catalysed reaction is tRNA(Gly) + glycine + ATP = glycyl-tRNA(Gly) + AMP + diphosphate. In terms of biological role, catalyzes the attachment of glycine to tRNA(Gly). The protein is Glycine--tRNA ligase of Geobacillus thermodenitrificans (strain NG80-2).